The sequence spans 514 residues: Serine--tRNA ligase, cytoplasmic (514 aa).

Methionine 1 is modified (N-acetylmethionine). An interaction with tRNA region spans residues 9–61 (RVDKGGDPALIRESQEKRFKDPGLVDQLVKADSEWRRCRFRADNLNKLKNLCS). The residue at position 241 (serine 241) is a Phosphoserine. Residues threonine 271 and arginine 302 each coordinate L-serine. ATP-binding positions include 302–304 (RQE) and 318–321 (VHQF). Lysine 323 carries the post-translational modification N6-acetyllysine. Position 325 (glutamate 325) interacts with L-serine. 391-394 (ELVS) is an ATP binding site. Asparagine 427 is a binding site for L-serine. A disordered region spans residues 475 to 514 (PIDQEPSKKQKKQHEGSKKKGAARDVALESQLQNMEVTDA). A compositionally biased stretch (basic and acidic residues) spans 479-501 (EPSKKQKKQHEGSKKKGAARDVA). Positions 482-494 (KKQKKQHEGSKKK) match the Nuclear localization signal motif. The segment covering 504–514 (SQLQNMEVTDA) has biased composition (polar residues).

It belongs to the class-II aminoacyl-tRNA synthetase family. Type-1 seryl-tRNA synthetase subfamily. Homodimer. The tRNA molecule may bind across the dimer. Interacts with SIRT2. Interacts with METTL6; interaction is required for the tRNA N(3)-methylcytidine methyltransferase activity of METTL6.

It localises to the cytoplasm. Its subcellular location is the nucleus. The enzyme catalyses tRNA(Ser) + L-serine + ATP = L-seryl-tRNA(Ser) + AMP + diphosphate + H(+). It carries out the reaction tRNA(Sec) + L-serine + ATP = L-seryl-tRNA(Sec) + AMP + diphosphate + H(+). The protein operates within aminoacyl-tRNA biosynthesis; selenocysteinyl-tRNA(Sec) biosynthesis; L-seryl-tRNA(Sec) from L-serine and tRNA(Sec): step 1/1. Its function is as follows. Catalyzes the attachment of serine to tRNA(Ser) in a two-step reaction: serine is first activated by ATP to form Ser-AMP and then transferred to the acceptor end of tRNA(Ser). Is probably also able to aminoacylate tRNA(Sec) with serine, to form the misacylated tRNA L-seryl-tRNA(Sec), which will be further converted into selenocysteinyl-tRNA(Sec). In the nucleus, binds to the VEGFA core promoter and prevents MYC binding and transcriptional activation by MYC. Recruits SIRT2 to the VEGFA promoter, promoting deacetylation of histone H4 at 'Lys-16' (H4K16). Thereby, inhibits the production of VEGFA and sprouting angiogenesis mediated by VEGFA. This is Serine--tRNA ligase, cytoplasmic (SARS1) from Bos taurus (Bovine).